The sequence spans 273 residues: Phosphate import ATP-binding protein PstB (273 aa).

The ABC transporter domain maps to 19 to 258 (ISIQNVTISY…FNETEKIFNS (240 aa)). 51–58 (GPSGCGKS) contacts ATP.

Belongs to the ABC transporter superfamily. Phosphate importer (TC 3.A.1.7) family. The complex is composed of two ATP-binding proteins (PstB), two transmembrane proteins (PstC and PstA) and a solute-binding protein (PstS).

It localises to the cell inner membrane. The catalysed reaction is phosphate(out) + ATP + H2O = ADP + 2 phosphate(in) + H(+). In terms of biological role, part of the ABC transporter complex PstSACB involved in phosphate import. Responsible for energy coupling to the transport system. This chain is Phosphate import ATP-binding protein PstB, found in Parasynechococcus marenigrum (strain WH8102).